The chain runs to 227 residues: 2-C-methyl-D-erythritol 4-phosphate cytidylyltransferase (227 aa).

The protein belongs to the IspD/TarI cytidylyltransferase family. IspD subfamily.

It carries out the reaction 2-C-methyl-D-erythritol 4-phosphate + CTP + H(+) = 4-CDP-2-C-methyl-D-erythritol + diphosphate. It participates in isoprenoid biosynthesis; isopentenyl diphosphate biosynthesis via DXP pathway; isopentenyl diphosphate from 1-deoxy-D-xylulose 5-phosphate: step 2/6. Functionally, catalyzes the formation of 4-diphosphocytidyl-2-C-methyl-D-erythritol from CTP and 2-C-methyl-D-erythritol 4-phosphate (MEP). In Dehalococcoides mccartyi (strain CBDB1), this protein is 2-C-methyl-D-erythritol 4-phosphate cytidylyltransferase.